A 515-amino-acid chain; its full sequence is Lysine--tRNA ligase (515 aa).

Residues glutamate 422 and glutamate 429 each contribute to the Mg(2+) site.

The protein belongs to the class-II aminoacyl-tRNA synthetase family. Homodimer. Requires Mg(2+) as cofactor.

The protein resides in the cytoplasm. It catalyses the reaction tRNA(Lys) + L-lysine + ATP = L-lysyl-tRNA(Lys) + AMP + diphosphate. In Clostridium acetobutylicum (strain ATCC 824 / DSM 792 / JCM 1419 / IAM 19013 / LMG 5710 / NBRC 13948 / NRRL B-527 / VKM B-1787 / 2291 / W), this protein is Lysine--tRNA ligase.